The following is a 177-amino-acid chain: Large ribosomal subunit protein uL6 (177 aa).

The protein belongs to the universal ribosomal protein uL6 family. As to quaternary structure, part of the 50S ribosomal subunit.

Functionally, this protein binds to the 23S rRNA, and is important in its secondary structure. It is located near the subunit interface in the base of the L7/L12 stalk, and near the tRNA binding site of the peptidyltransferase center. The chain is Large ribosomal subunit protein uL6 from Pseudomonas entomophila (strain L48).